A 443-amino-acid polypeptide reads, in one-letter code: Xaa-Pro dipeptidase (443 aa).

Mn(2+) is bound by residues Asp246, Asp257, His339, Glu384, and Glu423.

Belongs to the peptidase M24B family. Bacterial-type prolidase subfamily. Mn(2+) is required as a cofactor.

The enzyme catalyses Xaa-L-Pro dipeptide + H2O = an L-alpha-amino acid + L-proline. Functionally, splits dipeptides with a prolyl residue in the C-terminal position. The sequence is that of Xaa-Pro dipeptidase from Escherichia coli O157:H7.